The sequence spans 537 residues: Glutamyl-tRNA reductase, chloroplastic (537 aa).

The transit peptide at 1–48 (MMASTTSATAAGGAFAAAKTRAGSSAAGGGACARVAAGGRRRSGVVVR) directs the protein to the chloroplast. Substrate-binding positions include 134 to 137 (TCNR), serine 194, 199 to 201 (EGQ), and glutamine 205. Cysteine 135 functions as the Nucleophile in the catalytic mechanism. Position 276–281 (276–281 (GAGKMG)) interacts with NADP(+).

It belongs to the glutamyl-tRNA reductase family.

Its subcellular location is the plastid. The protein resides in the chloroplast. The catalysed reaction is (S)-4-amino-5-oxopentanoate + tRNA(Glu) + NADP(+) = L-glutamyl-tRNA(Glu) + NADPH + H(+). The protein operates within porphyrin-containing compound metabolism; protoporphyrin-IX biosynthesis; 5-aminolevulinate from L-glutamyl-tRNA(Glu): step 1/2. Catalyzes the NADPH-dependent reduction of glutamyl-tRNA(Glu) to glutamate 1-semialdehyde (GSA). The chain is Glutamyl-tRNA reductase, chloroplastic from Oryza sativa subsp. japonica (Rice).